Here is a 507-residue protein sequence, read N- to C-terminus: MAVATLISILFAVLALRLCYLLIHALFLSPLRHIPAPFMARVTSKRPLWHLLTGKAEIAARQDYSTFGDIYLCKPNTVYLCDPHDACTVLSSHAFRKTDMYRVFEYEGIPNVSTFTDPAQAQRRRRQLHPFFNNAYLTQMEPVMLKYGIQALKARWDAQLARHKKVEVNYRFDTQLAMFDITGALVFGREFHALETSNLVYTKWVNNTLSYMLVSHYFPWVKRVPLSWLVRGLKQSYDDLVAFSQESIAIRQADLQAGRPKPADLLQALLDAEDPDSKAPMTAREVQAESIAMLVGGSESTSSVISWVIHFLLLYPEHLQAVVAETRANFPADHTITFNESKANLPYLEACIYETLRCIPTASTSFPRVSDQAIILKGYYIPAGTEIATNKCAAHLHQPSWQDPDRFYPPRFLNQETYHETRRNMLSFAYGTRFCIGRNLAWAVMMVTLANLFKDYEVELPEDSRFGPTIVDAAGRPKIMPTKMGVATMPADPERDCRMVLSVRITE.

The N-terminal stretch at 1–25 (MAVATLISILFAVLALRLCYLLIHA) is a signal peptide. N-linked (GlcNAc...) asparagine glycans are attached at residues Asn-111, Asn-206, and Asn-339. A heme-binding site is contributed by Cys-435.

Belongs to the cytochrome P450 family. The cofactor is heme.

It participates in mycotoxin biosynthesis. Its function is as follows. Cytochrome P450 monooxygenase; part of the gene cluster that mediates the biosynthesis of helvolic acid, an antibacterial nortriterpenoid. Protostadienol synthase helA cyclizes (3S)-oxidosqualene to (17Z)-protosta-17(20),24-dien-3-beta-ol (protostadienol). The synthesis of protostadienol is followed by several steps of monooxygenation, dehydrogenation, and acyl transfer to yield the final helvolic acid. Following the cyclization to the tetracyclic protostadienol by helA, cytochrome P450 monooxygenases helB1-mediated and helB2-mediated oxidation at C-4 and C-16, acyltransferase helD2-dependent acetylation of 16-OH, oxidation of C-21 by cytochrome P450 monooxygenase helB4, and short chain dehydrogenase helC-dependent oxidative decarboxylation yield the fusidane skeleton. This intermediate is further modified in three additional steps mediated by the cytochrome P450 monooxygenase helB3, the acyltransferase helD1, and the 3-ketosteroid 1-dehydrogenase helE to give helvolic acid. Compared with the late stages in the biosynthesis of helvolic acid, enzymes involved in the early stage modifications act in a relatively strict order. The hydroxylation of C-16 by helB1 and subsequent acetylation by helD2 should occur before the helB3-mediated oxidation of C-21. C-4 demethylation in fusidane-type antibiotics proceeds in an unusual manner though it is also achieved by oxidative decarboxylation. The methyl group at C-4 beta position is oxidized by helB1 and subsequently removed by the short chain dehydrogenase helC. In Aspergillus fumigatus (strain ATCC MYA-4609 / CBS 101355 / FGSC A1100 / Af293) (Neosartorya fumigata), this protein is Cytochrome P450 monooxygenase helB3.